A 158-amino-acid polypeptide reads, in one-letter code: Transcription elongation factor GreB (158 aa).

Residues 53 to 75 (KRRLREIDRRVRFLTKRLEVLQI) are a coiled coil.

This sequence belongs to the GreA/GreB family. GreB subfamily.

Functionally, necessary for efficient RNA polymerase transcription elongation past template-encoded arresting sites. The arresting sites in DNA have the property of trapping a certain fraction of elongating RNA polymerases that pass through, resulting in locked ternary complexes. Cleavage of the nascent transcript by cleavage factors such as GreA or GreB allows the resumption of elongation from the new 3'terminus. GreB releases sequences of up to 9 nucleotides in length. The chain is Transcription elongation factor GreB from Haemophilus influenzae (strain ATCC 51907 / DSM 11121 / KW20 / Rd).